A 393-amino-acid chain; its full sequence is CCA-adding enzyme (393 aa).

ATP contacts are provided by G27 and R30. Positions 27 and 30 each coordinate CTP. Positions 40 and 42 each coordinate Mg(2+). R111, D154, R157, R160, and R163 together coordinate ATP. CTP-binding residues include R111, D154, R157, R160, and R163.

This sequence belongs to the tRNA nucleotidyltransferase/poly(A) polymerase family. Bacterial CCA-adding enzyme type 3 subfamily. As to quaternary structure, homodimer. It depends on Mg(2+) as a cofactor.

It carries out the reaction a tRNA precursor + 2 CTP + ATP = a tRNA with a 3' CCA end + 3 diphosphate. It catalyses the reaction a tRNA with a 3' CCA end + 2 CTP + ATP = a tRNA with a 3' CCACCA end + 3 diphosphate. In terms of biological role, catalyzes the addition and repair of the essential 3'-terminal CCA sequence in tRNAs without using a nucleic acid template. Adds these three nucleotides in the order of C, C, and A to the tRNA nucleotide-73, using CTP and ATP as substrates and producing inorganic pyrophosphate. tRNA 3'-terminal CCA addition is required both for tRNA processing and repair. Also involved in tRNA surveillance by mediating tandem CCA addition to generate a CCACCA at the 3' terminus of unstable tRNAs. While stable tRNAs receive only 3'-terminal CCA, unstable tRNAs are marked with CCACCA and rapidly degraded. The sequence is that of CCA-adding enzyme from Listeria monocytogenes serotype 4a (strain HCC23).